The following is a 146-amino-acid chain: MPCQDTVSLSIQHTSVYVQHSCCVSTSTSASTSATALGLGCLACGIVGVLVVAGGLCCLINGRCPSCRRLALRSRSWKSPPASLCTNQPLAFNLRDLTRSDIRCTSDPRSVELLSDVHSVVSHRERPPAYDSLDFEPTEYTPEAFQ.

A helical transmembrane segment spans residues 36–56; the sequence is ALGLGCLACGIVGVLVVAGGL.

It belongs to the aquareoviridae NS5 protein family.

It is found in the host membrane. This is Non-structural protein 5 (S7) from Aquareovirus C (isolate Golden shiner/USA/GSRV/1977) (AQRV-C).